A 269-amino-acid chain; its full sequence is Glutamate racemase (269 aa).

Residues 11-12 and 43-44 contribute to the substrate site; these read DS and YG. The Proton donor/acceptor role is filled by cysteine 74. Position 75-76 (75-76) interacts with substrate; that stretch reads NT. Cysteine 185 functions as the Proton donor/acceptor in the catalytic mechanism. A substrate-binding site is contributed by 186-187; the sequence is TH.

It belongs to the aspartate/glutamate racemases family.

The enzyme catalyses L-glutamate = D-glutamate. It participates in cell wall biogenesis; peptidoglycan biosynthesis. Its function is as follows. Provides the (R)-glutamate required for cell wall biosynthesis. The protein is Glutamate racemase of Bacillus cereus (strain G9842).